The chain runs to 450 residues: UDP-N-acetylmuramoylalanine--D-glutamate ligase (450 aa).

An ATP-binding site is contributed by Gly-119–Thr-125.

It belongs to the MurCDEF family.

The protein localises to the cytoplasm. The catalysed reaction is UDP-N-acetyl-alpha-D-muramoyl-L-alanine + D-glutamate + ATP = UDP-N-acetyl-alpha-D-muramoyl-L-alanyl-D-glutamate + ADP + phosphate + H(+). The protein operates within cell wall biogenesis; peptidoglycan biosynthesis. Functionally, cell wall formation. Catalyzes the addition of glutamate to the nucleotide precursor UDP-N-acetylmuramoyl-L-alanine (UMA). The chain is UDP-N-acetylmuramoylalanine--D-glutamate ligase from Streptococcus pneumoniae (strain ATCC BAA-255 / R6).